Here is a 210-residue protein sequence, read N- to C-terminus: MALELLTPFTKVELEEEKKESNRKQIGILGGNFNPIHNAHLVVADQVRQQLGLDQVLLMPECKPPHVDAKETIDEKHRLRMLELAIEDVEGLAIETCELERQGISYTYDTMLYLTEQHPDVDFYFIIGADMVDYLPKWHRIDELVKLVQFVGVQRPKYKAGTSYPVIWVDLPLIDISSSMIRDFIKKGRQPNYLLPKRVLDYITQEGLYQ.

The protein belongs to the NadD family.

It catalyses the reaction nicotinate beta-D-ribonucleotide + ATP + H(+) = deamido-NAD(+) + diphosphate. It functions in the pathway cofactor biosynthesis; NAD(+) biosynthesis; deamido-NAD(+) from nicotinate D-ribonucleotide: step 1/1. Its function is as follows. Catalyzes the reversible adenylation of nicotinate mononucleotide (NaMN) to nicotinic acid adenine dinucleotide (NaAD). In Streptococcus pyogenes serotype M1, this protein is Probable nicotinate-nucleotide adenylyltransferase.